Here is a 345-residue protein sequence, read N- to C-terminus: 3-isopropylmalate dehydrogenase (345 aa).

Residue 76-87 coordinates NAD(+); it reads GPKYDNAPVRPE. Residues R94, R104, R132, and D216 each contribute to the substrate site. Positions 216, 240, and 244 each coordinate Mg(2+). 274–286 contributes to the NAD(+) binding site; it reads GSAPDIAGQGIAN.

This sequence belongs to the isocitrate and isopropylmalate dehydrogenases family. LeuB type 1 subfamily. In terms of assembly, homodimer. The cofactor is Mg(2+). Mn(2+) serves as cofactor.

It is found in the cytoplasm. It catalyses the reaction (2R,3S)-3-isopropylmalate + NAD(+) = 4-methyl-2-oxopentanoate + CO2 + NADH. It participates in amino-acid biosynthesis; L-leucine biosynthesis; L-leucine from 3-methyl-2-oxobutanoate: step 3/4. In terms of biological role, catalyzes the oxidation of 3-carboxy-2-hydroxy-4-methylpentanoate (3-isopropylmalate) to 3-carboxy-4-methyl-2-oxopentanoate. The product decarboxylates to 4-methyl-2 oxopentanoate. In Streptococcus thermophilus (strain CNRZ 1066), this protein is 3-isopropylmalate dehydrogenase.